The chain runs to 585 residues: Lipoprotein LpqB (585 aa).

A signal peptide spans 1-17; that stretch reads MGRKLLGLLMLAVLLAG. Cys18 carries the N-palmitoyl cysteine lipid modification. Cys18 carries S-diacylglycerol cysteine lipidation. 2 disordered regions span residues 24–48 and 560–585; these read SSAP…TPGM and PSAD…VLPG.

This sequence belongs to the LpqB lipoprotein family.

The protein resides in the cell membrane. The polypeptide is Lipoprotein LpqB (Mycolicibacterium paratuberculosis (strain ATCC BAA-968 / K-10) (Mycobacterium paratuberculosis)).